The primary structure comprises 360 residues: Isopentenyl-diphosphate delta-isomerase (360 aa).

Residue 6–7 (RK) coordinates substrate. FMN-binding positions include Thr62, 63–65 (GMT), Ser93, and Asn122. 93-95 (SQR) provides a ligand contact to substrate. Residue Gln157 coordinates substrate. Residue Glu158 coordinates Mg(2+). FMN-binding positions include Lys189, Ser214, Thr219, 272-274 (GIR), and 293-294 (AL).

The protein belongs to the IPP isomerase type 2 family. As to quaternary structure, homooctamer. Dimer of tetramers. The cofactor is FMN. NADPH is required as a cofactor. Mg(2+) serves as cofactor.

The protein resides in the cytoplasm. It carries out the reaction isopentenyl diphosphate = dimethylallyl diphosphate. Its function is as follows. Involved in the biosynthesis of isoprenoids. Catalyzes the 1,3-allylic rearrangement of the homoallylic substrate isopentenyl (IPP) to its allylic isomer, dimethylallyl diphosphate (DMAPP). In Ignicoccus hospitalis (strain KIN4/I / DSM 18386 / JCM 14125), this protein is Isopentenyl-diphosphate delta-isomerase.